The primary structure comprises 201 residues: Small ribosomal subunit protein uS4c (201 aa).

Residues 15 to 43 (LGALPGLTRKTPKSGSNQKKKFHSGKKEQ) are disordered. The region spanning 89 to 150 (MRLDNILFRL…NQRSKRLVQN (62 aa)) is the S4 RNA-binding domain.

The protein belongs to the universal ribosomal protein uS4 family. As to quaternary structure, part of the 30S ribosomal subunit. Contacts protein S5. The interaction surface between S4 and S5 is involved in control of translational fidelity.

The protein localises to the plastid. Its subcellular location is the chloroplast. In terms of biological role, one of the primary rRNA binding proteins, it binds directly to 16S rRNA where it nucleates assembly of the body of the 30S subunit. Functionally, with S5 and S12 plays an important role in translational accuracy. The sequence is that of Small ribosomal subunit protein uS4c (rps4) from Sorghum bicolor (Sorghum).